A 357-amino-acid chain; its full sequence is GTPase Obg (357 aa).

The Obg domain maps to 1 to 158 (MFVDNIKLKV…LEIVLELKLI (158 aa)). The OBG-type G domain occupies 159–345 (ADVGLVGFPN…LKFALFDLVE (187 aa)). Residues 165–172 (GFPNAGKS), 190–194 (FTTLT), 212–215 (DIPG), 280–283 (TKCD), and 326–328 (SSV) contribute to the GTP site. Mg(2+) is bound by residues Ser172 and Thr192.

The protein belongs to the TRAFAC class OBG-HflX-like GTPase superfamily. OBG GTPase family. As to quaternary structure, monomer. The cofactor is Mg(2+).

It localises to the cytoplasm. Its function is as follows. An essential GTPase which binds GTP, GDP and possibly (p)ppGpp with moderate affinity, with high nucleotide exchange rates and a fairly low GTP hydrolysis rate. Plays a role in control of the cell cycle, stress response, ribosome biogenesis and in those bacteria that undergo differentiation, in morphogenesis control. This Nautilia profundicola (strain ATCC BAA-1463 / DSM 18972 / AmH) protein is GTPase Obg.